Reading from the N-terminus, the 118-residue chain is MPRVKGGTVTRKRRKKVLKLAKGYRGAKHLLFKAANAQVMVSYRYAFRDRRAKKRDFRRLWIARINAAARMNDISYSKLMHGLKVANVDMNRKMLADLAVSDPDGFKAVADTAKKALA.

Belongs to the bacterial ribosomal protein bL20 family.

Its function is as follows. Binds directly to 23S ribosomal RNA and is necessary for the in vitro assembly process of the 50S ribosomal subunit. It is not involved in the protein synthesizing functions of that subunit. In Lacticaseibacillus casei (strain BL23) (Lactobacillus casei), this protein is Large ribosomal subunit protein bL20.